The sequence spans 420 residues: Reticulon-4 receptor-like 2 (420 aa).

The N-terminal stretch at 1 to 30 (MLPGLRRLLQGPASACLLLTLLALPPVTPS) is a signal peptide. Intrachain disulfides connect Cys31-Cys37 and Cys35-Cys46. An LRRNT domain is found at 31–60 (CPMLCTCYSSPPTVSCQANNFSSVPLSLPP). Asn50 carries N-linked (GlcNAc...) asparagine glycosylation. LRR repeat units follow at residues 61–82 (STQRLFLQNNLIRSLRPGTFGP), 83–104 (NLLTLWLFSNNLSTIYPGTFRH), 107–129 (ALEELDLGDNRHLRSLEPDTFQG), 132–153 (RLQSLHLYRCQLSSLPGNIFRG), 156–177 (SLQYLYLQENSLLHLQDDLFAD), 180–201 (NLSHLFLHGNRLRLLTEHVFRG), 204–225 (SLDRLLLHGNRLQGVHRAAFHG), and 228–249 (RLTILYLFNNSLASLPGEALAD). An N-linked (GlcNAc...) asparagine glycan is attached at Asn93. N-linked (GlcNAc...) asparagine glycosylation is present at Asn236. An LRRCT domain is found at 261–312 (NPWACDCRARPLWAWFQRARVSSSDVTCATPPERQGRDLRTLRDTDFQACPP). 2 disulfides stabilise this stretch: Cys265-Cys288 and Cys267-Cys310. Residues 286–390 (VTCATPPERQ…GEQTCPGAAC (105 aa)) are disordered. Positions 294 to 306 (RQGRDLRTLRDTD) are enriched in basic and acidic residues. Residues 315–327 (PTRPGSRARGNSS) are important for interaction with MAG. Residues 351-360 (LPAEDSRGRQ) are compositionally biased toward basic and acidic residues. Cys390 carries the GPI-anchor amidated cysteine lipid modification. Residues 391–420 (QAPADSRGPVLSAGLRTPLLCLLLLAPHHL) constitute a propeptide, removed in mature form.

Belongs to the Nogo receptor family. In terms of assembly, interaction with MAG is controversial, and may be indirect. Interacts with MAG. Does not interact with OMG and RTN4. In terms of processing, undergoes zinc metalloproteinase-mediated ectodomain shedding in neuroblastoma cells; is released both as a full-length ectodomain and an N-terminal fragment containing the leucine-rich repeat (LRR) region of the protein. N-glycosylated. O-glycosylated. Contains terminal sialic acid groups on its glycan chains. As to expression, detected in adult brain, in neocortex, hippocampus, striatum and dorsal root ganglion neurons, and in retina (at protein level). In brain, detected in cerebral cortex and hippocampus. Weak or no expression detected in the cerebellum, thalamus or striatum.

The protein localises to the cell membrane. The protein resides in the cell projection. It localises to the dendrite. Its subcellular location is the perikaryon. It is found in the axon. The protein localises to the membrane raft. In terms of biological role, cell surface receptor that plays a functionally redundant role in the inhibition of neurite outgrowth mediated by MAG. Plays a functionally redundant role in postnatal brain development. Contributes to normal axon migration across the brain midline and normal formation of the corpus callosum. Does not seem to play a significant role in regulating axon regeneration in the adult central nervous system. Protects motoneurons against apoptosis; protection against apoptosis is probably mediated by MAG. Like other family members, plays a role in restricting the number dendritic spines and the number of synapses that are formed during brain development. Signaling mediates activation of Rho and downstream reorganization of the actin cytoskeleton. The chain is Reticulon-4 receptor-like 2 from Rattus norvegicus (Rat).